Reading from the N-terminus, the 324-residue chain is Acetyl-coenzyme A carboxylase carboxyl transferase subunit alpha (324 aa).

The region spanning 37–291 (ILEDKLENLE…NVVLQKTFEQ (255 aa)) is the CoA carboxyltransferase C-terminal domain.

This sequence belongs to the AccA family. In terms of assembly, acetyl-CoA carboxylase is a heterohexamer composed of biotin carboxyl carrier protein (AccB), biotin carboxylase (AccC) and two subunits each of ACCase subunit alpha (AccA) and ACCase subunit beta (AccD).

The protein localises to the cytoplasm. It carries out the reaction N(6)-carboxybiotinyl-L-lysyl-[protein] + acetyl-CoA = N(6)-biotinyl-L-lysyl-[protein] + malonyl-CoA. The protein operates within lipid metabolism; malonyl-CoA biosynthesis; malonyl-CoA from acetyl-CoA: step 1/1. Its function is as follows. Component of the acetyl coenzyme A carboxylase (ACC) complex. First, biotin carboxylase catalyzes the carboxylation of biotin on its carrier protein (BCCP) and then the CO(2) group is transferred by the carboxyltransferase to acetyl-CoA to form malonyl-CoA. This is Acetyl-coenzyme A carboxylase carboxyl transferase subunit alpha from Bacillus cytotoxicus (strain DSM 22905 / CIP 110041 / 391-98 / NVH 391-98).